A 369-amino-acid polypeptide reads, in one-letter code: Uroporphyrinogen decarboxylase (369 aa).

Residues 36-40 (RQAGR), Asp-86, Tyr-162, Ser-217, and His-342 each bind substrate.

The protein belongs to the uroporphyrinogen decarboxylase family. As to quaternary structure, homodimer.

The protein localises to the cytoplasm. The enzyme catalyses uroporphyrinogen III + 4 H(+) = coproporphyrinogen III + 4 CO2. It participates in porphyrin-containing compound metabolism; protoporphyrin-IX biosynthesis; coproporphyrinogen-III from 5-aminolevulinate: step 4/4. In terms of biological role, catalyzes the decarboxylation of four acetate groups of uroporphyrinogen-III to yield coproporphyrinogen-III. In Albidiferax ferrireducens (strain ATCC BAA-621 / DSM 15236 / T118) (Rhodoferax ferrireducens), this protein is Uroporphyrinogen decarboxylase.